Reading from the N-terminus, the 510-residue chain is Cytochrome P450 monooxygenase BOT1 (510 aa).

Residues 16-36 (PLAWAALILASFTLYSVQLVV) traverse the membrane as a helical segment. Cys454 contacts heme. N-linked (GlcNAc...) asparagine glycosylation is present at Asn476.

The protein belongs to the cytochrome P450 family. Heme is required as a cofactor.

The protein resides in the membrane. It participates in secondary metabolite biosynthesis. In terms of biological role, cytochrome P450 monooxygenase; part of the gene cluster that mediates the biosynthesis of botrydial. Botrydial is necessary for colonization of plant tissue by the T4 strain. It is a strain-dependent virulence factor since highly aggressive strains like SAS56 or B05 still retain substantial virulence when botrydial synthesis is impaired, since they produce also botcinic acid. The first step of botrydial biosynthesis is performed by the sesquiterpene synthase BOT2 which catalyzes the cyclization of farnesyl diphosphate (FPP) to presilphiperfolan-8-beta-ol (PSP). The cytochrome P450 monooxygenase BOT4 then catalyzes the hydroxylation at C-4 to give a probotryane intermediate. Acetylation of the hydroxyl at C-4 is carried out by the acetyltransferase BOT5, followed by the combined action of the P450 monooxygenases BOT3 and BOT1, to yield finally the glycol, via the regio- and stereospecific hydroxylations at C-10 and C-15 of the probotryane intermediates, respectively. The cleavage of the C10-C15 bond of probotryane skeleton is an intriguing and chemically important reaction, which could be mediated by some of the monooxygenases or by a combination of them. It is possible that either BOT3 or BOT1 would oxidize either the 10- or the 15-hydroxy group to the hydroperoxide derivative, which would then undergo heterolytic fragmentation to give the dialdehyde botrydial. Finally, the dehydrogenase BOT7 might be involved in the conversion of botrydial to dihydrobotrydial. The protein is Cytochrome P450 monooxygenase BOT1 of Botryotinia fuckeliana (Noble rot fungus).